The chain runs to 91 residues: DNA-directed RNA polymerase subunit omega (91 aa).

Residues glutamine 66 to glutamate 91 form a disordered region.

It belongs to the RNA polymerase subunit omega family. The RNAP catalytic core consists of 2 alpha, 1 beta, 1 beta' and 1 omega subunit. When a sigma factor is associated with the core the holoenzyme is formed, which can initiate transcription.

The enzyme catalyses RNA(n) + a ribonucleoside 5'-triphosphate = RNA(n+1) + diphosphate. Promotes RNA polymerase assembly. Latches the N- and C-terminal regions of the beta' subunit thereby facilitating its interaction with the beta and alpha subunits. This is DNA-directed RNA polymerase subunit omega from Acidithiobacillus ferrooxidans (strain ATCC 23270 / DSM 14882 / CIP 104768 / NCIMB 8455) (Ferrobacillus ferrooxidans (strain ATCC 23270)).